The primary structure comprises 668 residues: DNA-directed RNA polymerase subunit beta' (668 aa).

Zn(2+) is bound by residues C71, C73, C91, and C94. Positions 505, 507, and 509 each coordinate Mg(2+).

The protein belongs to the RNA polymerase beta' chain family. RpoC1 subfamily. In plastids the minimal PEP RNA polymerase catalytic core is composed of four subunits: alpha, beta, beta', and beta''. When a (nuclear-encoded) sigma factor is associated with the core the holoenzyme is formed, which can initiate transcription. It depends on Mg(2+) as a cofactor. Zn(2+) is required as a cofactor.

Its subcellular location is the plastid. The protein localises to the chloroplast. The enzyme catalyses RNA(n) + a ribonucleoside 5'-triphosphate = RNA(n+1) + diphosphate. DNA-dependent RNA polymerase catalyzes the transcription of DNA into RNA using the four ribonucleoside triphosphates as substrates. The polypeptide is DNA-directed RNA polymerase subunit beta' (Mesostigma viride (Green alga)).